The primary structure comprises 374 residues: Probable dual-specificity RNA methyltransferase RlmN 3 (374 aa).

The active-site Proton acceptor is the glutamate 96. The Radical SAM core domain maps to 110–350 (DHSRKTICIS…VTLRREKGHD (241 aa)). Cysteines 117 and 355 form a disulfide. Residues cysteine 124, cysteine 128, and cysteine 131 each coordinate [4Fe-4S] cluster. Residues 181–182 (GE), serine 213, 236–238 (SLH), and asparagine 312 each bind S-adenosyl-L-methionine. Cysteine 355 functions as the S-methylcysteine intermediate in the catalytic mechanism.

It belongs to the radical SAM superfamily. RlmN family. [4Fe-4S] cluster serves as cofactor.

The protein localises to the cytoplasm. The enzyme catalyses adenosine(2503) in 23S rRNA + 2 reduced [2Fe-2S]-[ferredoxin] + 2 S-adenosyl-L-methionine = 2-methyladenosine(2503) in 23S rRNA + 5'-deoxyadenosine + L-methionine + 2 oxidized [2Fe-2S]-[ferredoxin] + S-adenosyl-L-homocysteine. It catalyses the reaction adenosine(37) in tRNA + 2 reduced [2Fe-2S]-[ferredoxin] + 2 S-adenosyl-L-methionine = 2-methyladenosine(37) in tRNA + 5'-deoxyadenosine + L-methionine + 2 oxidized [2Fe-2S]-[ferredoxin] + S-adenosyl-L-homocysteine. Its function is as follows. Specifically methylates position 2 of adenine 2503 in 23S rRNA and position 2 of adenine 37 in tRNAs. The sequence is that of Probable dual-specificity RNA methyltransferase RlmN 3 from Opitutus terrae (strain DSM 11246 / JCM 15787 / PB90-1).